The following is a 298-amino-acid chain: Ribosomal RNA small subunit methyltransferase A (298 aa).

S-adenosyl-L-methionine is bound by residues Asn35, Leu37, Gly62, Glu83, Asp108, and Asn133.

It belongs to the class I-like SAM-binding methyltransferase superfamily. rRNA adenine N(6)-methyltransferase family. RsmA subfamily.

Its subcellular location is the cytoplasm. The enzyme catalyses adenosine(1518)/adenosine(1519) in 16S rRNA + 4 S-adenosyl-L-methionine = N(6)-dimethyladenosine(1518)/N(6)-dimethyladenosine(1519) in 16S rRNA + 4 S-adenosyl-L-homocysteine + 4 H(+). In terms of biological role, specifically dimethylates two adjacent adenosines (A1518 and A1519) in the loop of a conserved hairpin near the 3'-end of 16S rRNA in the 30S particle. May play a critical role in biogenesis of 30S subunits. The polypeptide is Ribosomal RNA small subunit methyltransferase A (Streptococcus pyogenes serotype M4 (strain MGAS10750)).